A 707-amino-acid polypeptide reads, in one-letter code: Signal transducer and activator of transcription A (707 aa).

A compositionally biased stretch (polar residues) spans 70-89 (LNQSDQFNLGRSNNLTPRTN). The disordered stretch occupies residues 70-246 (LNQSDQFNLG…GNPNLSSPQP (177 aa)). Residues 90 to 111 (QLQQLQQQQQQQQQPQQQQQQQ) are compositionally biased toward low complexity. Positions 112 to 121 (TYGTQSPIHM) are enriched in polar residues. Residues 142 to 238 (QQSYNNNNSN…QQQQQQQQGN (97 aa)) show a composition bias toward low complexity. The stretch at 242–356 (SSPQPILDTI…IQSILNPQHS (115 aa)) forms a coiled coil. The DNA-binding element occupies 443 to 487 (KFLAGTRKCSVNLKFGVNIRDLDNVTTTVESDASNPFVVITNECQ). Positions 583-686 (WQEGIIYGYM…FLKLHKDTAL (104 aa)) constitute an SH2 domain. Y702 is modified (phosphotyrosine).

The protein belongs to the transcription factor STAT family. Monomer, in the absence of tyrosine phosphorylation. Homodimer, or heterodimer with another family member, when tyrosine phosphorylated. In terms of processing, tyrosine phosphorylated in response to cAMP. Not tyrosine phosphorylated in growing cells. Tyrosine phosphorylation is first detected at the tight mound stage, continues throughout the slug stage and early culmination, and starts to decrease at mid-culmination. Barely detectable in fruiting bodies.

Its subcellular location is the cytoplasm. It localises to the nucleus. Transcription factor that binds to 5'-TTGAATTGA-3' elements in the promoter region of target genes. Functions as a repressor of the ecmB gene. Regulates the differentiation of prestalk cells during development. In Dictyostelium discoideum (Social amoeba), this protein is Signal transducer and activator of transcription A (dstA).